A 1712-amino-acid chain; its full sequence is U3 small nucleolar RNA-associated protein 10 (1712 aa).

HEAT repeat units lie at residues 164 to 202, 490 to 528, 564 to 605, 987 to 1025, 1236 to 1275, 1605 to 1646, and 1667 to 1705; these read EELV…GRGE, TCDF…ASGS, TLLS…PKHG, TQTI…AFEH, VISL…RFGK, EEVT…DSAA, and LGLL…VLGE.

It belongs to the HEATR1/UTP10 family. Component of the ribosomal small subunit (SSU) processome.

It is found in the nucleus. Its subcellular location is the nucleolus. Its function is as follows. Involved in nucleolar processing of pre-18S ribosomal RNA. Involved in ribosome biosynthesis. This is U3 small nucleolar RNA-associated protein 10 from Phaeosphaeria nodorum (strain SN15 / ATCC MYA-4574 / FGSC 10173) (Glume blotch fungus).